Reading from the N-terminus, the 94-residue chain is MEHTDVVIAPVLTEKSNALRQQGKYVFRVAARATKIQIKQAVTQLFGVTVRRCTVMNVFGKKRRVRHRTGRTSGWKKAIVHVAAGQSIGVLERA.

Belongs to the universal ribosomal protein uL23 family. In terms of assembly, part of the 50S ribosomal subunit. Contacts protein L29, and trigger factor when it is bound to the ribosome.

Functionally, one of the early assembly proteins it binds 23S rRNA. One of the proteins that surrounds the polypeptide exit tunnel on the outside of the ribosome. Forms the main docking site for trigger factor binding to the ribosome. This Treponema pallidum (strain Nichols) protein is Large ribosomal subunit protein uL23.